A 1316-amino-acid polypeptide reads, in one-letter code: DNA-directed RNA polymerase subunit beta' (1316 aa).

Residues Cys60, Cys62, Cys75, and Cys78 each contribute to the Zn(2+) site. 3 residues coordinate Mg(2+): Asp535, Asp537, and Asp539. Cys891, Cys968, Cys975, and Cys978 together coordinate Zn(2+).

The protein belongs to the RNA polymerase beta' chain family. In terms of assembly, the RNAP catalytic core consists of 2 alpha, 1 beta, 1 beta' and 1 omega subunit. When a sigma factor is associated with the core the holoenzyme is formed, which can initiate transcription. It depends on Mg(2+) as a cofactor. Zn(2+) serves as cofactor.

The enzyme catalyses RNA(n) + a ribonucleoside 5'-triphosphate = RNA(n+1) + diphosphate. Its function is as follows. DNA-dependent RNA polymerase catalyzes the transcription of DNA into RNA using the four ribonucleoside triphosphates as substrates. The sequence is that of DNA-directed RNA polymerase subunit beta' from Mycobacterium bovis (strain BCG / Pasteur 1173P2).